Here is a 481-residue protein sequence, read N- to C-terminus: Protein nucleotidyltransferase YdiU (481 aa).

ATP contacts are provided by glycine 85, glycine 87, arginine 88, lysine 108, aspartate 120, glycine 121, arginine 172, and arginine 179. The Proton acceptor role is filled by aspartate 248. 2 residues coordinate Mg(2+): asparagine 249 and aspartate 258. Aspartate 258 contacts ATP.

This sequence belongs to the SELO family. Mg(2+) serves as cofactor. Requires Mn(2+) as cofactor.

The enzyme catalyses L-seryl-[protein] + ATP = 3-O-(5'-adenylyl)-L-seryl-[protein] + diphosphate. It carries out the reaction L-threonyl-[protein] + ATP = 3-O-(5'-adenylyl)-L-threonyl-[protein] + diphosphate. The catalysed reaction is L-tyrosyl-[protein] + ATP = O-(5'-adenylyl)-L-tyrosyl-[protein] + diphosphate. It catalyses the reaction L-histidyl-[protein] + UTP = N(tele)-(5'-uridylyl)-L-histidyl-[protein] + diphosphate. The enzyme catalyses L-seryl-[protein] + UTP = O-(5'-uridylyl)-L-seryl-[protein] + diphosphate. It carries out the reaction L-tyrosyl-[protein] + UTP = O-(5'-uridylyl)-L-tyrosyl-[protein] + diphosphate. Its function is as follows. Nucleotidyltransferase involved in the post-translational modification of proteins. It can catalyze the addition of adenosine monophosphate (AMP) or uridine monophosphate (UMP) to a protein, resulting in modifications known as AMPylation and UMPylation. This chain is Protein nucleotidyltransferase YdiU, found in Cereibacter sphaeroides (strain ATCC 17025 / ATH 2.4.3) (Rhodobacter sphaeroides).